The chain runs to 904 residues: Leucine--tRNA ligase (904 aa).

The 'HIGH' region motif lies at 49–59 (PYPSGDLHIGH). A 'KMSKS' region motif is present at residues 663–667 (TMSKS). K666 provides a ligand contact to ATP.

Belongs to the class-I aminoacyl-tRNA synthetase family.

Its subcellular location is the cytoplasm. The catalysed reaction is tRNA(Leu) + L-leucine + ATP = L-leucyl-tRNA(Leu) + AMP + diphosphate. This is Leucine--tRNA ligase from Roseiflexus castenholzii (strain DSM 13941 / HLO8).